Here is a 531-residue protein sequence, read N- to C-terminus: O-phosphoserine--tRNA(Cys) ligase (531 aa).

Substrate is bound by residues 189-191 (HMT), 234-236 (SAS), 276-277 (YY), and Asn319.

This sequence belongs to the class-II aminoacyl-tRNA synthetase family. O-phosphoseryl-tRNA(Cys) synthetase subfamily. As to quaternary structure, homotetramer. Interacts with SepCysS.

The enzyme catalyses tRNA(Cys) + O-phospho-L-serine + ATP = O-phospho-L-seryl-tRNA(Cys) + AMP + diphosphate. In terms of biological role, catalyzes the attachment of O-phosphoserine (Sep) to tRNA(Cys). This Methanospirillum hungatei JF-1 (strain ATCC 27890 / DSM 864 / NBRC 100397 / JF-1) protein is O-phosphoserine--tRNA(Cys) ligase.